A 1202-amino-acid chain; its full sequence is PAN2-PAN3 deadenylation complex catalytic subunit PAN2 (1202 aa).

4 WD repeats span residues 153–193 (DENE…QKYA), 195–231 (ETPG…VEHE), 244–280 (VHGN…AITP), and 328–367 (PVGP…SFNP). Residues 368-485 (YSRETEFALP…VGREEEPHLH (118 aa)) are linker. A USP domain is found at 486–924 (MVSKKYRKVT…VPAILYYVKR (439 aa)). A Phosphoserine modification is found at S791. Residues 975–1147 (VGLDAEFVTL…EDARTALQLY (173 aa)) form the Exonuclease domain. The a divalent metal cation site is built by D978, E980, D1087, and D1139. Phosphoserine is present on S1189.

It belongs to the peptidase C19 family. PAN2 subfamily. In terms of assembly, forms a heterotrimer with an asymmetric homodimer of the regulatory subunit PAN3 to form the poly(A)-nuclease (PAN) deadenylation complex. Interacts with PAN3 isoform 1/Pan3L and isoform 3/Pan3S. Interacts with ZFP36. It depends on a divalent metal cation as a cofactor.

The protein localises to the cytoplasm. The protein resides in the P-body. It localises to the nucleus. It catalyses the reaction Exonucleolytic cleavage of poly(A) to 5'-AMP.. Its activity is regulated as follows. Positively regulated by the regulatory subunit PAN3. Catalytic subunit of the poly(A)-nuclease (PAN) deadenylation complex, one of two cytoplasmic mRNA deadenylases involved in general and miRNA-mediated mRNA turnover. PAN specifically shortens poly(A) tails of RNA and the activity is stimulated by poly(A)-binding protein (PABP). PAN deadenylation is followed by rapid degradation of the shortened mRNA tails by the CCR4-NOT complex. Deadenylated mRNAs are then degraded by two alternative mechanisms, namely exosome-mediated 3'-5' exonucleolytic degradation, or deadenylation-dependent mRNA decaping and subsequent 5'-3' exonucleolytic degradation by XRN1. Also acts as an important regulator of the HIF1A-mediated hypoxic response. Required for HIF1A mRNA stability independent of poly(A) tail length regulation. The chain is PAN2-PAN3 deadenylation complex catalytic subunit PAN2 from Homo sapiens (Human).